The sequence spans 340 residues: UDP-3-O-acylglucosamine N-acyltransferase (340 aa).

Histidine 247 (proton acceptor) is an active-site residue.

Belongs to the transferase hexapeptide repeat family. LpxD subfamily. In terms of assembly, homotrimer.

It carries out the reaction a UDP-3-O-[(3R)-3-hydroxyacyl]-alpha-D-glucosamine + a (3R)-hydroxyacyl-[ACP] = a UDP-2-N,3-O-bis[(3R)-3-hydroxyacyl]-alpha-D-glucosamine + holo-[ACP] + H(+). Its pathway is bacterial outer membrane biogenesis; LPS lipid A biosynthesis. Catalyzes the N-acylation of UDP-3-O-acylglucosamine using 3-hydroxyacyl-ACP as the acyl donor. Is involved in the biosynthesis of lipid A, a phosphorylated glycolipid that anchors the lipopolysaccharide to the outer membrane of the cell. This Caulobacter sp. (strain K31) protein is UDP-3-O-acylglucosamine N-acyltransferase.